Reading from the N-terminus, the 419-residue chain is Imidazolonepropionase (419 aa).

Fe(3+)-binding residues include histidine 87 and histidine 89. The Zn(2+) site is built by histidine 87 and histidine 89. Residues arginine 96, tyrosine 159, and histidine 192 each coordinate 4-imidazolone-5-propanoate. Tyrosine 159 is a binding site for N-formimidoyl-L-glutamate. Position 257 (histidine 257) interacts with Fe(3+). A Zn(2+)-binding site is contributed by histidine 257. A 4-imidazolone-5-propanoate-binding site is contributed by glutamine 260. Aspartate 332 is a Fe(3+) binding site. Residue aspartate 332 coordinates Zn(2+). Asparagine 334 and glycine 336 together coordinate N-formimidoyl-L-glutamate. Serine 337 contributes to the 4-imidazolone-5-propanoate binding site.

Belongs to the metallo-dependent hydrolases superfamily. HutI family. The cofactor is Zn(2+). Requires Fe(3+) as cofactor.

It localises to the cytoplasm. It carries out the reaction 4-imidazolone-5-propanoate + H2O = N-formimidoyl-L-glutamate. It participates in amino-acid degradation; L-histidine degradation into L-glutamate; N-formimidoyl-L-glutamate from L-histidine: step 3/3. In terms of biological role, catalyzes the hydrolytic cleavage of the carbon-nitrogen bond in imidazolone-5-propanoate to yield N-formimidoyl-L-glutamate. It is the third step in the universal histidine degradation pathway. This chain is Imidazolonepropionase, found in Alteromonas mediterranea (strain DSM 17117 / CIP 110805 / LMG 28347 / Deep ecotype).